The following is a 372-amino-acid chain: Protein L-Myc-1a (372 aa).

Disordered regions lie at residues 172-226 and 243-306; these read KVAA…ADPF and NYAA…DDLR. Acidic residues predominate over residues 187-197; that stretch reads SDDDEDDDEID. Positions 269 to 284 are enriched in low complexity; sequence ESSSAPSSPLSSPATS. Residues 289–341 enclose the bHLH domain; sequence STEQRRNFLERKRRDDLRSRFQALREEIPGLSGSSKTSKVAILTQATDYLLQL. Residues 290-306 are compositionally biased toward basic and acidic residues; it reads TEQRRNFLERKRRDDLR. The interval 341–369 is leucine-zipper; that stretch reads LHSSQRRQAQEKRKLKAKQQQLLRRISAL.

Efficient DNA binding requires dimerization with another bHLH protein. Binds DNA as a heterodimer with max. As to expression, uterus.

It is found in the nucleus. The chain is Protein L-Myc-1a from Danio rerio (Zebrafish).